Consider the following 289-residue polypeptide: Pantoate kinase (289 aa).

Belongs to the GHMP kinase family. PoK subfamily.

It carries out the reaction (R)-pantoate + ATP = (R)-4-phosphopantoate + ADP + H(+). It participates in cofactor biosynthesis; coenzyme A biosynthesis. In terms of biological role, phosphorylates (R)-pantoate to form (R)-4-phosphopantoate in the CoA biosynthesis pathway. ATP is the best phosphate donor. Can be replaced with UTP, with lower efficiency. In Methanospirillum hungatei JF-1 (strain ATCC 27890 / DSM 864 / NBRC 100397 / JF-1), this protein is Pantoate kinase.